Reading from the N-terminus, the 444-residue chain is Cell division cycle 20.4, cofactor of APC complex (444 aa).

Polar residues predominate over residues 88–99; that stretch reads LLSTNHSDSPHQ. Residues 88-108 form a disordered region; that stretch reads LLSTNHSDSPHQNPKPVKPRR. WD repeat units lie at residues 124-161, 166-205, 209-246, 250-289, 298-340, 342-383, and 386-425; these read RDDFSLNLLDWGSANVLAIALGDTVYLWDASSGSTSEL, EDKGPVTSINWTQDGLDLAVGLDNSEVQLWDCVSNRQVRT, GHESRVGSLAWDNHILTTGGMDGKIVNNDVRIRSSIVE, GHTEEVCGLKWSESGNKQASGGNDNVVHIWDRSLASSKQT, EHTA…CLNS, ETGS…KMAE, and GHTSRVLFMAQSPNGCTVASAAGDENLRLWNVFGEPPKTT.

This sequence belongs to the WD repeat CDC20/Fizzy family. In terms of assembly, the APC/C is composed of at least 11 subunits that stay tightly associated throughout the cell cycle.

It localises to the cytoplasm. Its pathway is protein modification; protein ubiquitination. Component of the anaphase promoting complex/cyclosome (APC/C), a cell cycle-regulated E3 ubiquitin-protein ligase complex that controls progression through mitosis and the G1 phase of the cell cycle. The protein is Cell division cycle 20.4, cofactor of APC complex (CDC20-4) of Arabidopsis thaliana (Mouse-ear cress).